A 213-amino-acid polypeptide reads, in one-letter code: MLPLAIPPNNIVRAMSSPNATGPLMRTSKAIITSNYTLLTDKTPYLLPVCFNESCRAEQVRMLYRRFFRLRPLVAQRAMIKESYTNYIRVKFSEDYALKRRQALPQNTCPVLDAIEAGRRSLTFILKAVSEIEDADSNPELAYDNYICRKILKNVLTLEYQRERLEFKNPKRKQILRQNYEYLDAKYHDPKYTSLRNADVSIIHFNETLGTRL.

Belongs to the IRC19 family.

Its function is as follows. Involved in sporulation and maintenance of the mitochondrial DNA. Is probably involved in a pathway contributing to genomic integrity. This is Increased recombination centers protein 19 (IRC19) from Eremothecium gossypii (strain ATCC 10895 / CBS 109.51 / FGSC 9923 / NRRL Y-1056) (Yeast).